Reading from the N-terminus, the 357-residue chain is MTIKISIDCMGGDHGPAVTIPAAISFVESEPDAELILVGLADQLWAELKKHKAGEHPRLSVVNATEVVTMDDTLEAALRRKKNSSMRVAINLVKQGQADACVSAGNTGALMAISRYVLKTLPGVDRPAICSILPNQKDGPTYMLDLGANVDCEPQHLHQFALMGSALVSAMEGKPRPTVGLLNVGEEDIKGNDIVKQTAVLLRADHERGTLNFYGNVEGNDIFKGTTDIVVCDGFVGNVTLKASEGLGRFVKSVLTTEFKRNPLTMLGALIARSALKAISQRLNPSRYNGGSLLGLRGLVFKSHGGADAYGYQWAIKRAFDAAKYDVLARISTKIADLMPQSALTPLPEDSVTATEQ.

Belongs to the PlsX family. In terms of assembly, homodimer. Probably interacts with PlsY.

The protein resides in the cytoplasm. The enzyme catalyses a fatty acyl-[ACP] + phosphate = an acyl phosphate + holo-[ACP]. It participates in lipid metabolism; phospholipid metabolism. In terms of biological role, catalyzes the reversible formation of acyl-phosphate (acyl-PO(4)) from acyl-[acyl-carrier-protein] (acyl-ACP). This enzyme utilizes acyl-ACP as fatty acyl donor, but not acyl-CoA. The chain is Phosphate acyltransferase from Herminiimonas arsenicoxydans.